Consider the following 373-residue polypeptide: MSMSRGGNTTLDLQPLLAESDVGNRELEEKMGGSADRSSLLDGSGSKELSHREREDSALFVKKIGSALFYGLSSFMITVVNKTVLTSYHFPSFLFLSLGQLTASIVVLGMGKRLKLVNFPPLQRNTFAKIFPLPLIFLGNMMFGLGGTKTLSLPMFAALRRFSILMTMLLELKILGLRPSNAVQVSVYAMIGGALLAASDDLSFNMRGYIYVMITNALTASNGVYVKKKLDTSEIGKYGLMYYNSLFMFLPALALNYVTGNLDQALNFEQWNDSVFVVQFLLSCVMGFILSYSTILCTQFNSALTTTIVGCLKNICVTYLGMFIGGDYVFSWLNCIGINISVLASLLYTYVTFRRKRAPDKQDHLPSTRGENV.

The disordered stretch occupies residues 27–49 (LEEKMGGSADRSSLLDGSGSKEL). S50 is subject to Phosphoserine. 8 helical membrane-spanning segments follow: residues 89-111 (HFPS…LGMG), 131-153 (FPLP…TLSL), 174-196 (ILGL…GALL), 206-225 (MRGY…NGVY), 238-260 (YGLM…YVTG), 275-297 (VFVV…TILC), 302-324 (SALT…GMFI), and 329-351 (VFSW…YTYV).

It belongs to the TPT transporter family. SLC35D subfamily.

It is found in the golgi apparatus membrane. Its function is as follows. Involved in the import of UDP-sugars from the cytoplasm into the Golgi lumen. The chain is UDP-sugar transporter UST74c (frc) from Drosophila melanogaster (Fruit fly).